The following is a 90-amino-acid chain: Small ribosomal subunit protein bS18 (90 aa).

This sequence belongs to the bacterial ribosomal protein bS18 family. Part of the 30S ribosomal subunit. Forms a tight heterodimer with protein bS6.

In terms of biological role, binds as a heterodimer with protein bS6 to the central domain of the 16S rRNA, where it helps stabilize the platform of the 30S subunit. This Bordetella petrii (strain ATCC BAA-461 / DSM 12804 / CCUG 43448) protein is Small ribosomal subunit protein bS18.